A 43-amino-acid polypeptide reads, in one-letter code: Protein PsbN (43 aa).

The chain crosses the membrane as a helical span at residues 5-27 (NLVTISISCLLVSLTGYAIYTSF).

It belongs to the PsbN family.

The protein localises to the plastid. The protein resides in the chloroplast thylakoid membrane. Functionally, may play a role in photosystem I and II biogenesis. The protein is Protein PsbN of Gnetum gnemon (Spanish joint-fir).